Here is a 505-residue protein sequence, read N- to C-terminus: Deoxyguanosinetriphosphate triphosphohydrolase (505 aa).

The region spanning 66–273 (RLTHSMEVQQ…MEAADDISYC (208 aa)) is the HD domain.

The protein belongs to the dGTPase family. Type 1 subfamily. As to quaternary structure, homotetramer. The cofactor is Mg(2+).

The enzyme catalyses dGTP + H2O = 2'-deoxyguanosine + triphosphate + H(+). With respect to regulation, inhibited by the action of reducing agents such as dithiothreitol and 2-mercaptoethanol. In terms of biological role, dGTPase preferentially hydrolyzes dGTP over the other canonical NTPs. The chain is Deoxyguanosinetriphosphate triphosphohydrolase from Shigella boydii.